The chain runs to 132 residues: Small ribosomal subunit protein uS8c (132 aa).

Belongs to the universal ribosomal protein uS8 family. Part of the 30S ribosomal subunit.

It is found in the plastid. The protein localises to the chloroplast. One of the primary rRNA binding proteins, it binds directly to 16S rRNA central domain where it helps coordinate assembly of the platform of the 30S subunit. This chain is Small ribosomal subunit protein uS8c (rps8), found in Spirogyra maxima (Green alga).